A 685-amino-acid polypeptide reads, in one-letter code: Phenoloxidase subunit 1 (685 aa).

Residues histidine 209, histidine 213, and histidine 239 each contribute to the Cu cation site. Catalysis depends on glutamate 351, which acts as the Proton acceptor. 3 residues coordinate Cu cation: histidine 366, histidine 370, and histidine 406. 2 disulfide bridges follow: cysteine 580/cysteine 622 and cysteine 582/cysteine 629.

As to quaternary structure, heterodimer. Forms a complex with an interleukin 1-like protein as a consequence of a host defense response. Cu(2+) serves as cofactor. The N-terminus is blocked. As to expression, synthesized by oenocytoids, a type of hemocyte, and released into the hemolymph plasma.

The protein resides in the secreted. The catalysed reaction is 2 L-dopa + O2 = 2 L-dopaquinone + 2 H2O. The enzyme catalyses L-tyrosine + O2 = L-dopaquinone + H2O. Its activity is regulated as follows. Activated by immulectin and lipopolysaccharide. In terms of biological role, this is a copper-containing oxidase that functions in the formation of pigments such as melanins and other polyphenolic compounds. Catalyzes the rate-limiting conversions of tyrosine to DOPA, DOPA to DOPA-quinone and possibly 5,6 dihydroxyindole to indole-5'6 quinone. Binds to the surface of hemocytes and is involved in hemocyte melanization. The protein is Phenoloxidase subunit 1 of Manduca sexta (Tobacco hawkmoth).